The primary structure comprises 377 residues: Chaperone protein DnaJ (377 aa).

The J domain maps to 4–69 (DYYEALGVTR…QKRAAYDRFG (66 aa)). Residues 135–213 (GKTAQIRVPT…CHGQGRVTQE (79 aa)) form a CR-type zinc finger. Zn(2+) is bound by residues Cys148, Cys151, Cys165, Cys168, Cys187, Cys190, Cys201, and Cys204. CXXCXGXG motif repeat units lie at residues 148 to 155 (CDECSGSG), 165 to 172 (CTMCSGSG), 187 to 194 (CPGCNGRG), and 201 to 208 (CEKCHGQG).

This sequence belongs to the DnaJ family. Homodimer. Zn(2+) serves as cofactor.

Its subcellular location is the cytoplasm. Functionally, participates actively in the response to hyperosmotic and heat shock by preventing the aggregation of stress-denatured proteins and by disaggregating proteins, also in an autonomous, DnaK-independent fashion. Unfolded proteins bind initially to DnaJ; upon interaction with the DnaJ-bound protein, DnaK hydrolyzes its bound ATP, resulting in the formation of a stable complex. GrpE releases ADP from DnaK; ATP binding to DnaK triggers the release of the substrate protein, thus completing the reaction cycle. Several rounds of ATP-dependent interactions between DnaJ, DnaK and GrpE are required for fully efficient folding. Also involved, together with DnaK and GrpE, in the DNA replication of plasmids through activation of initiation proteins. In Brucella abortus (strain S19), this protein is Chaperone protein DnaJ.